We begin with the raw amino-acid sequence, 1207 residues long: Putative coatomer subunit alpha (1207 aa).

WD repeat units follow at residues 9–50 (SRSS…DRFD), 51–90 (GHDG…LLFS), 93–134 (GHMD…AILT), 135–174 (GHSH…MKNA), 210–249 (GHDR…AWEV), 254–293 (GHFN…AVQT), 296–336 (RDND…HALN), and 370–411 (SAWL…NSLP). Phosphoserine is present on residues S409 and S942.

As to quaternary structure, oligomeric complex that consists of at least the alpha, beta, beta', gamma, delta, epsilon and zeta subunits.

The protein resides in the cytoplasm. Its subcellular location is the golgi apparatus membrane. The coatomer is a cytosolic protein complex that binds to dilysine motifs and reversibly associates with Golgi non-clathrin-coated vesicles, which further mediate biosynthetic protein transport from the ER, via the Golgi up to the trans Golgi network. Coatomer complex is required for budding from Golgi membranes, and is essential for the retrograde Golgi-to-ER transport of dilysine-tagged proteins. The sequence is that of Putative coatomer subunit alpha from Schizosaccharomyces pombe (strain 972 / ATCC 24843) (Fission yeast).